Reading from the N-terminus, the 370-residue chain is Aminomethyltransferase (370 aa).

Belongs to the GcvT family. In terms of assembly, the glycine cleavage system is composed of four proteins: P, T, L and H.

The enzyme catalyses N(6)-[(R)-S(8)-aminomethyldihydrolipoyl]-L-lysyl-[protein] + (6S)-5,6,7,8-tetrahydrofolate = N(6)-[(R)-dihydrolipoyl]-L-lysyl-[protein] + (6R)-5,10-methylene-5,6,7,8-tetrahydrofolate + NH4(+). The glycine cleavage system catalyzes the degradation of glycine. The protein is Aminomethyltransferase of Clostridium botulinum (strain Kyoto / Type A2).